The following is a 187-amino-acid chain: Probable RNA 2'-phosphotransferase (187 aa).

It belongs to the KptA/TPT1 family.

Removes the 2'-phosphate from RNA via an intermediate in which the phosphate is ADP-ribosylated by NAD followed by a presumed transesterification to release the RNA and generate ADP-ribose 1''-2''-cyclic phosphate (APPR&gt;P). May function as an ADP-ribosylase. The sequence is that of Probable RNA 2'-phosphotransferase from Pseudomonas syringae pv. tomato (strain ATCC BAA-871 / DC3000).